The chain runs to 133 residues: MKLGSAIPWALLFSTATLISTGWGLDYHACGGRLTDDYGTIFTYKGPKTECVWTLQVDPKYKLLVSIPTLNLTCGKEYVEILEGAPGSKSLGKFCEGLSILNRGSSGMTVKYKRDSGHPASPYEIIFLRDSQG.

The N-terminal stretch at 1 to 24 (MKLGSAIPWALLFSTATLISTGWG) is a signal peptide. Residues Cys30 and Cys51 are joined by a disulfide bond. Residues 30–130 (CGGRLTDDYG…SPYEIIFLRD (101 aa)) form the CUB domain. Asn71 carries N-linked (GlcNAc...) (complex) asparagine glycosylation. A disulfide bond links Cys74 and Cys95.

Monomer or heterodimer with PSP-II (depending on the type of glycosylation of PSP-I). In terms of tissue distribution, seminal plasma or sperm.

Its subcellular location is the secreted. In terms of biological role, not yet identified, major porcine seminal plasma protein. Can bind soybean trypsin inhibitor after deglycosylation. In Sus scrofa (Pig), this protein is Major seminal plasma glycoprotein PSP-I.